Consider the following 156-residue polypeptide: Small ribosomal subunit protein uS7 (156 aa).

The protein belongs to the universal ribosomal protein uS7 family. As to quaternary structure, part of the 30S ribosomal subunit. Contacts proteins S9 and S11.

Its function is as follows. One of the primary rRNA binding proteins, it binds directly to 16S rRNA where it nucleates assembly of the head domain of the 30S subunit. Is located at the subunit interface close to the decoding center, probably blocks exit of the E-site tRNA. The chain is Small ribosomal subunit protein uS7 from Geobacter metallireducens (strain ATCC 53774 / DSM 7210 / GS-15).